The primary structure comprises 209 residues: 3-demethoxyubiquinol 3-hydroxylase (209 aa).

6 residues coordinate Fe cation: Glu58, Glu88, His91, Glu140, Glu172, and His175.

This sequence belongs to the COQ7 family. Requires Fe cation as cofactor.

Its subcellular location is the cell membrane. The enzyme catalyses a 5-methoxy-2-methyl-3-(all-trans-polyprenyl)benzene-1,4-diol + AH2 + O2 = a 3-demethylubiquinol + A + H2O. It participates in cofactor biosynthesis; ubiquinone biosynthesis. Functionally, catalyzes the hydroxylation of 2-nonaprenyl-3-methyl-6-methoxy-1,4-benzoquinol during ubiquinone biosynthesis. The chain is 3-demethoxyubiquinol 3-hydroxylase from Polaromonas naphthalenivorans (strain CJ2).